We begin with the raw amino-acid sequence, 352 residues long: Neuronal growth regulator 1 (352 aa).

The signal sequence occupies residues 1 to 35 (MVPLVRGAGGSHQWLAAVLLGLCCLLPAGRLAAPG). Ig-like C2-type domains are found at residues 36 to 132 (GDFP…VHLT), 137 to 219 (PKIF…KVTV), and 223 to 311 (PTIQ…LPLN). Cys58 and Cys116 are oxidised to a cystine. N-linked (GlcNAc...) asparagine glycans are attached at residues Asn71 and Asn153. Disulfide bonds link Cys158–Cys201 and Cys243–Cys295. N-linked (GlcNAc...) asparagine glycans are attached at residues Asn273, Asn284, Asn292, and Asn305. Gly322 carries GPI-anchor amidated glycine lipidation. Residues 323-352 (DAEVLFSCWYLVLTLSSLTSIFYLKNIILH) constitute a propeptide, removed in mature form.

Belongs to the immunoglobulin superfamily. IgLON family. In terms of assembly, interacts with CEPU-1 and LAMP. Post-translationally, glycosylated. In terms of tissue distribution, expressed in embryonic retina, telencephalon, tectum, cerebellum and diencephalon (at protein level).

It is found in the cell membrane. In terms of biological role, may be involved in cell-adhesion. May participate in the regulation of neurite outgrowth in the developing brain. This Gallus gallus (Chicken) protein is Neuronal growth regulator 1 (NEGR1).